A 479-amino-acid polypeptide reads, in one-letter code: Glutamate--tRNA ligase (479 aa).

The 'HIGH' region motif lies at 21–31; the sequence is PSPTGYLHVGG. A 'KMSKS' region motif is present at residues 248 to 252; the sequence is KLSKR. An ATP-binding site is contributed by lysine 251.

It belongs to the class-I aminoacyl-tRNA synthetase family. Glutamate--tRNA ligase type 1 subfamily. As to quaternary structure, monomer.

The protein resides in the cytoplasm. The enzyme catalyses tRNA(Glu) + L-glutamate + ATP = L-glutamyl-tRNA(Glu) + AMP + diphosphate. Its function is as follows. Catalyzes the attachment of glutamate to tRNA(Glu) in a two-step reaction: glutamate is first activated by ATP to form Glu-AMP and then transferred to the acceptor end of tRNA(Glu). This is Glutamate--tRNA ligase from Actinobacillus pleuropneumoniae serotype 5b (strain L20).